Reading from the N-terminus, the 293-residue chain is Ribosomal RNA small subunit methyltransferase H (293 aa).

S-adenosyl-L-methionine is bound by residues 32 to 34 (GGH), Asp-51, Phe-78, Asp-99, and Gln-106. The interval 274–293 (DEIRENPASRSAKMRVARRL) is disordered.

The protein belongs to the methyltransferase superfamily. RsmH family.

It localises to the cytoplasm. It carries out the reaction cytidine(1402) in 16S rRNA + S-adenosyl-L-methionine = N(4)-methylcytidine(1402) in 16S rRNA + S-adenosyl-L-homocysteine + H(+). Its function is as follows. Specifically methylates the N4 position of cytidine in position 1402 (C1402) of 16S rRNA. The protein is Ribosomal RNA small subunit methyltransferase H of Sulfurihydrogenibium azorense (strain DSM 15241 / OCM 825 / Az-Fu1).